The primary structure comprises 536 residues: Thiamine transport system permease protein ThiP (536 aa).

12 helical membrane passes run Gly16–Leu36, Phe58–Ala78, Leu95–Tyr115, Phe134–Ala154, Val199–Gly219, Pro240–Leu260, Asp291–Val311, Ser334–Trp354, Leu373–Leu393, Ala404–Leu424, Ala463–Phe483, and Asp506–Glu526. The 206-residue stretch at Val56–Ser261 folds into the ABC transmembrane type-1 1 domain. Residues Val331 to Ile525 enclose the ABC transmembrane type-1 2 domain.

This sequence belongs to the binding-protein-dependent transport system permease family. In terms of assembly, the complex is composed of two ATP-binding proteins (ThiQ), two transmembrane proteins (ThiP) and a solute-binding protein (ThiB).

It is found in the cell inner membrane. Its function is as follows. Part of the ABC transporter complex ThiBPQ involved in thiamine import. Probably responsible for the translocation of the substrate across the membrane. Is also involved in thiamine pyrophosphate transport. The polypeptide is Thiamine transport system permease protein ThiP (Salmonella typhimurium (strain LT2 / SGSC1412 / ATCC 700720)).